The chain runs to 123 residues: Large ribosomal subunit protein uL18 (123 aa).

The protein belongs to the universal ribosomal protein uL18 family. In terms of assembly, part of the 50S ribosomal subunit; part of the 5S rRNA/L5/L18/L25 subcomplex. Contacts the 5S and 23S rRNAs.

This is one of the proteins that bind and probably mediate the attachment of the 5S RNA into the large ribosomal subunit, where it forms part of the central protuberance. The chain is Large ribosomal subunit protein uL18 from Chlamydia muridarum (strain MoPn / Nigg).